The chain runs to 155 residues: Small ribosomal subunit protein uS7cz/uS7cy (155 aa).

As to quaternary structure, component of the chloroplast small ribosomal subunit (SSU). Mature 70S chloroplast ribosomes of higher plants consist of a small (30S) and a large (50S) subunit. The 30S small subunit contains 1 molecule of ribosomal RNA (16S rRNA) and 24 different proteins. The 50S large subunit contains 3 rRNA molecules (23S, 5S and 4.5S rRNA) and 33 different proteins.

The protein resides in the plastid. Its subcellular location is the chloroplast. In terms of biological role, component of the chloroplast ribosome (chloro-ribosome), a dedicated translation machinery responsible for the synthesis of chloroplast genome-encoded proteins, including proteins of the transcription and translation machinery and components of the photosynthetic apparatus. This Spinacia oleracea (Spinach) protein is Small ribosomal subunit protein uS7cz/uS7cy (rps7-A).